We begin with the raw amino-acid sequence, 63 residues long: DNA-directed RNA polymerase 7 kDa subunit (63 aa).

This sequence belongs to the poxviridae DNA-directed RNA polymerase 7 kDa subunit family. As to quaternary structure, the DNA-dependent RNA polymerase used for intermediate and late genes expression consists of eight subunits 147 kDa, 133 kDa, 35 kDa, 30 kDa, 22 kDa, 19 kDa, 18 kDa and 7 kDa totalling more than 500 kDa in mass. The same holoenzyme, with the addition of the transcription-specificity factor RAP94, is used for early gene expression.

It localises to the virion. It carries out the reaction RNA(n) + a ribonucleoside 5'-triphosphate = RNA(n+1) + diphosphate. Functionally, part of the DNA-dependent RNA polymerase which catalyzes the transcription of viral DNA into RNA using the four ribonucleoside triphosphates as substrates. Responsible for the transcription of early, intermediate and late genes. DNA-dependent RNA polymerase associates with the early transcription factor (ETF) thereby allowing the early genes transcription. Late transcription, and probably also intermediate transcription, require newly synthesized RNA polymerase. The sequence is that of DNA-directed RNA polymerase 7 kDa subunit (RPO7) from Homo sapiens (Human).